A 165-amino-acid chain; its full sequence is MAGRLDEDLKDVTLLGNQNTKYLFEYSPEILETFDNNHPNRDYFVKFNCPEFTSLCPKTGQPDFATIYISYIPEKKMVESKSLKLYLFSFRNHGDFHEDCMNVIMNDLIELMDPRYIEVWGKFTPRGGISIDPYCNYGRPGTKYEKMAEYRMMNHDLYPETVDNR.

The active-site Thioimide intermediate is the Cys56. The Proton donor role is filled by Asp63. Residues 78 to 80 (VES) and 97 to 98 (HE) each bind substrate.

Belongs to the GTP cyclohydrolase I family. QueF type 1 subfamily.

It localises to the cytoplasm. The enzyme catalyses 7-aminomethyl-7-carbaguanine + 2 NADP(+) = 7-cyano-7-deazaguanine + 2 NADPH + 3 H(+). It functions in the pathway tRNA modification; tRNA-queuosine biosynthesis. Its function is as follows. Catalyzes the NADPH-dependent reduction of 7-cyano-7-deazaguanine (preQ0) to 7-aminomethyl-7-deazaguanine (preQ1). In Bacillus cytotoxicus (strain DSM 22905 / CIP 110041 / 391-98 / NVH 391-98), this protein is NADPH-dependent 7-cyano-7-deazaguanine reductase.